Consider the following 512-residue polypeptide: Protein SHC1 (512 aa).

Residues 101–113 (EQDEFENDVEDDA) are compositionally biased toward acidic residues. 2 disordered regions span residues 101–122 (EQDE…EKSQ) and 144–164 (DGNS…ESVA). 4 Sel1-like repeats span residues 318-353 (PDAQ…KRMH), 354-389 (IESV…TKNH), 390-429 (PAAM…SMAS), and 433-470 (CGAP…ALGH).

It belongs to the SKT5 family.

It is found in the cytoplasm. It localises to the cytoplasmic granule membrane. Required for the activation of chitin synthase III (CHS3) activity during the sporulation process. The chain is Protein SHC1 (SHC1) from Saccharomyces cerevisiae (strain ATCC 204508 / S288c) (Baker's yeast).